We begin with the raw amino-acid sequence, 124 residues long: Fluoride-specific ion channel FluC (124 aa).

4 helical membrane-spanning segments follow: residues 5-27 (LFVA…LMLQ), 42-62 (ILGS…EVSP), 63-83 (EIKA…STFS), and 95-115 (LVKA…VVYL). Na(+) is bound by residues G74 and T77.

The protein belongs to the fluoride channel Fluc/FEX (TC 1.A.43) family.

It is found in the cell inner membrane. It catalyses the reaction fluoride(in) = fluoride(out). Na(+) is not transported, but it plays an essential structural role and its presence is essential for fluoride channel function. Functionally, fluoride-specific ion channel. Important for reducing fluoride concentration in the cell, thus reducing its toxicity. This Shewanella piezotolerans (strain WP3 / JCM 13877) protein is Fluoride-specific ion channel FluC.